The following is a 49-amino-acid chain: Large ribosomal subunit protein bL33 (49 aa).

The protein belongs to the bacterial ribosomal protein bL33 family.

This chain is Large ribosomal subunit protein bL33, found in Heliobacterium modesticaldum (strain ATCC 51547 / Ice1).